The sequence spans 104 residues: Large ribosomal subunit protein uL24 (104 aa).

The protein belongs to the universal ribosomal protein uL24 family. In terms of assembly, part of the 50S ribosomal subunit.

Its function is as follows. One of two assembly initiator proteins, it binds directly to the 5'-end of the 23S rRNA, where it nucleates assembly of the 50S subunit. One of the proteins that surrounds the polypeptide exit tunnel on the outside of the subunit. The polypeptide is Large ribosomal subunit protein uL24 (Serratia proteamaculans (strain 568)).